The primary structure comprises 228 residues: L-ribulose-5-phosphate 4-epimerase UlaF (228 aa).

Residues 26–27 (GN), 43–44 (SG), and 72–73 (SS) contribute to the substrate site. Zn(2+) contacts are provided by D74, H93, and H95. The active-site Proton donor/acceptor is the D118. H167 provides a ligand contact to Zn(2+). The Proton donor/acceptor role is filled by Y225.

This sequence belongs to the aldolase class II family. AraD/FucA subfamily. It depends on Zn(2+) as a cofactor.

It carries out the reaction L-ribulose 5-phosphate = D-xylulose 5-phosphate. Its pathway is cofactor degradation; L-ascorbate degradation; D-xylulose 5-phosphate from L-ascorbate: step 4/4. Its function is as follows. Catalyzes the isomerization of L-ribulose 5-phosphate to D-xylulose 5-phosphate. Is involved in the anaerobic L-ascorbate utilization. The chain is L-ribulose-5-phosphate 4-epimerase UlaF from Escherichia coli (strain 55989 / EAEC).